The following is a 600-amino-acid chain: NADH-quinone oxidoreductase subunit C/D (600 aa).

The segment at 1-190 (MVNNMTDLTA…SPFELTKAKQ (190 aa)) is NADH dehydrogenase I subunit C. Residues 214 to 600 (DFMFLNLGPN…IDFVMSDVDR (387 aa)) are NADH dehydrogenase I subunit D.

This sequence in the N-terminal section; belongs to the complex I 30 kDa subunit family. In the C-terminal section; belongs to the complex I 49 kDa subunit family. As to quaternary structure, NDH-1 is composed of 13 different subunits. Subunits NuoB, CD, E, F, and G constitute the peripheral sector of the complex.

It localises to the cell inner membrane. The catalysed reaction is a quinone + NADH + 5 H(+)(in) = a quinol + NAD(+) + 4 H(+)(out). Functionally, NDH-1 shuttles electrons from NADH, via FMN and iron-sulfur (Fe-S) centers, to quinones in the respiratory chain. The immediate electron acceptor for the enzyme in this species is believed to be ubiquinone. Couples the redox reaction to proton translocation (for every two electrons transferred, four hydrogen ions are translocated across the cytoplasmic membrane), and thus conserves the redox energy in a proton gradient. This Escherichia coli O157:H7 protein is NADH-quinone oxidoreductase subunit C/D.